The following is a 103-amino-acid chain: Co-chaperonin GroES (103 aa).

It belongs to the GroES chaperonin family. Heptamer of 7 subunits arranged in a ring. Interacts with the chaperonin GroEL.

The protein resides in the cytoplasm. Together with the chaperonin GroEL, plays an essential role in assisting protein folding. The GroEL-GroES system forms a nano-cage that allows encapsulation of the non-native substrate proteins and provides a physical environment optimized to promote and accelerate protein folding. GroES binds to the apical surface of the GroEL ring, thereby capping the opening of the GroEL channel. This is Co-chaperonin GroES from Prochlorococcus marinus subsp. pastoris (strain CCMP1986 / NIES-2087 / MED4).